The sequence spans 293 residues: Bifunctional protein FolD (293 aa).

NADP(+)-binding positions include 164–166 (GRS), S193, and T234.

The protein belongs to the tetrahydrofolate dehydrogenase/cyclohydrolase family. As to quaternary structure, homodimer.

The catalysed reaction is (6R)-5,10-methylene-5,6,7,8-tetrahydrofolate + NADP(+) = (6R)-5,10-methenyltetrahydrofolate + NADPH. It carries out the reaction (6R)-5,10-methenyltetrahydrofolate + H2O = (6R)-10-formyltetrahydrofolate + H(+). It participates in one-carbon metabolism; tetrahydrofolate interconversion. Catalyzes the oxidation of 5,10-methylenetetrahydrofolate to 5,10-methenyltetrahydrofolate and then the hydrolysis of 5,10-methenyltetrahydrofolate to 10-formyltetrahydrofolate. This Phocaeicola vulgatus (strain ATCC 8482 / DSM 1447 / JCM 5826 / CCUG 4940 / NBRC 14291 / NCTC 11154) (Bacteroides vulgatus) protein is Bifunctional protein FolD.